A 349-amino-acid polypeptide reads, in one-letter code: uncharacterized protein (349 aa).

The chain crosses the membrane as a helical span at residues 16-36 (LVITIISTGLIFGMTLVLTGL). The tract at residues 111–139 (FGAPEHGPGMPRVSEGRSPSKPDEVAASS) is disordered. Positions 124-134 (SEGRSPSKPDE) are enriched in basic and acidic residues. 3 helical membrane-spanning segments follow: residues 231 to 251 (ISIV…SVVY), 284 to 304 (VIAL…APLF), and 307 to 327 (IVAV…VIGL).

Belongs to the ABC-4 integral membrane protein family. As to quaternary structure, the complex is composed of two ATP-binding proteins (MT0079), two transmembrane proteins (MT0078) and a solute-binding protein.

It is found in the cell membrane. In terms of biological role, probably part of an ABC transporter complex. Probably responsible for the translocation of the substrate across the membrane. This is an uncharacterized protein from Mycobacterium tuberculosis (strain CDC 1551 / Oshkosh).